The chain runs to 503 residues: UDP-N-acetylmuramoylalanine--D-glutamate ligase (503 aa).

129–135 contributes to the ATP binding site; that stretch reads GTNGKTT. Residues 284–305 are disordered; it reads DSEAEGEGKPRRRKADATAQEA.

It belongs to the MurCDEF family.

It is found in the cytoplasm. It catalyses the reaction UDP-N-acetyl-alpha-D-muramoyl-L-alanine + D-glutamate + ATP = UDP-N-acetyl-alpha-D-muramoyl-L-alanyl-D-glutamate + ADP + phosphate + H(+). Its pathway is cell wall biogenesis; peptidoglycan biosynthesis. Functionally, cell wall formation. Catalyzes the addition of glutamate to the nucleotide precursor UDP-N-acetylmuramoyl-L-alanine (UMA). This Cupriavidus pinatubonensis (strain JMP 134 / LMG 1197) (Cupriavidus necator (strain JMP 134)) protein is UDP-N-acetylmuramoylalanine--D-glutamate ligase.